We begin with the raw amino-acid sequence, 334 residues long: Phenylalanine--tRNA ligase alpha subunit (334 aa).

Mg(2+) is bound at residue Glu249.

This sequence belongs to the class-II aminoacyl-tRNA synthetase family. Phe-tRNA synthetase alpha subunit type 1 subfamily. In terms of assembly, tetramer of two alpha and two beta subunits. Requires Mg(2+) as cofactor.

It localises to the cytoplasm. The enzyme catalyses tRNA(Phe) + L-phenylalanine + ATP = L-phenylalanyl-tRNA(Phe) + AMP + diphosphate + H(+). This is Phenylalanine--tRNA ligase alpha subunit from Desulfosudis oleivorans (strain DSM 6200 / JCM 39069 / Hxd3) (Desulfococcus oleovorans).